Consider the following 135-residue polypeptide: uncharacterized protein (135 aa).

2 helical membrane-spanning segments follow: residues 20–40 (IFSFVFDIFLFIFDVIWNTKL) and 47–67 (IAYFLVFFMVIKLSIYAIHGT).

It belongs to the plectrovirus ORF5 family.

Its subcellular location is the host membrane. This is an uncharacterized protein from Spiroplasma virus SpV1-C74 (SpV1).